The following is a 227-amino-acid chain: ATP synthase F(0) complex subunit a (227 aa).

Transmembrane regions (helical) follow at residues 13-33, 69-89, 98-118, 132-152, 179-199, and 202-222; these read YLLGIPLILVAMLLPWLLFPA, WALLFASLMVFLITINLLGLL, QLSLNMGFAVPLWLATVIIGM, EGTPIPLIPALIIIETISLFI, VFVLLPMMPAVAILTASVLFL, and LLEVAVAMIQAYVFILLLSLY.

This sequence belongs to the ATPase A chain family. As to quaternary structure, component of the ATP synthase complex composed at least of ATP5F1A/subunit alpha, ATP5F1B/subunit beta, ATP5MC1/subunit c (homooctomer), MT-ATP6/subunit a, MT-ATP8/subunit 8, ATP5ME/subunit e, ATP5MF/subunit f, ATP5MG/subunit g, ATP5MK/subunit k, ATP5MJ/subunit j, ATP5F1C/subunit gamma, ATP5F1D/subunit delta, ATP5F1E/subunit epsilon, ATP5PF/subunit F6, ATP5PB/subunit b, ATP5PD/subunit d, ATP5PO/subunit OSCP. ATP synthase complex consists of a soluble F(1) head domain (subunits alpha(3) and beta(3)) - the catalytic core - and a membrane F(0) domain - the membrane proton channel (subunits c, a, 8, e, f, g, k and j). These two domains are linked by a central stalk (subunits gamma, delta, and epsilon) rotating inside the F1 region and a stationary peripheral stalk (subunits F6, b, d, and OSCP). Interacts with DNAJC30; interaction is direct.

It localises to the mitochondrion inner membrane. The catalysed reaction is H(+)(in) = H(+)(out). Subunit a, of the mitochondrial membrane ATP synthase complex (F(1)F(0) ATP synthase or Complex V) that produces ATP from ADP in the presence of a proton gradient across the membrane which is generated by electron transport complexes of the respiratory chain. ATP synthase complex consist of a soluble F(1) head domain - the catalytic core - and a membrane F(1) domain - the membrane proton channel. These two domains are linked by a central stalk rotating inside the F(1) region and a stationary peripheral stalk. During catalysis, ATP synthesis in the catalytic domain of F(1) is coupled via a rotary mechanism of the central stalk subunits to proton translocation. With the subunit c (ATP5MC1), forms the proton-conducting channel in the F(0) domain, that contains two crucial half-channels (inlet and outlet) that facilitate proton movement from the mitochondrial intermembrane space (IMS) into the matrix. Protons are taken up via the inlet half-channel and released through the outlet half-channel, following a Grotthuss mechanism. In Danio rerio (Zebrafish), this protein is ATP synthase F(0) complex subunit a.